The sequence spans 626 residues: Basic helix-loop-helix ARNT-like protein 1 (626 aa).

The tract at residues 1–60 (MADQRMDISSTISDFMSPGATDLLSSPLGTSGMDCNRKRKGSSTDYQESMDTDKDDPHGR) is disordered. Position 17 is a phosphoserine; by GSK3-beta (Ser17). Thr21 bears the Phosphothreonine; by GSK3-beta mark. The short motif at 36 to 41 (NRKRKG) is the Nuclear localization signal element. Positions 51–60 (DTDKDDPHGR) are enriched in basic and acidic residues. Positions 72 to 125 (NAREAHSQIEKRRRDKMNSFIDELASLVPTCNAMSRKLDKLTVLRMAVQHMKTL) constitute a bHLH domain. At Ser78 the chain carries Phosphoserine. Ser90 is modified (phosphoserine; by CK2). Positions 142–152 (LSDDELKHLIL) match the Nuclear export signal 1 motif. Residues 143-215 (SDDELKHLIL…EQLSSSDTAP (73 aa)) form the PAS 1 domain. Lys252 participates in a covalent cross-link: Glycyl lysine isopeptide (Lys-Gly) (interchain with G-Cter in SUMO2 and SUMO3). Lys259 is covalently cross-linked (Glycyl lysine isopeptide (Lys-Gly) (interchain with G-Cter in SUMO); alternate). Residue Lys259 forms a Glycyl lysine isopeptide (Lys-Gly) (interchain with G-Cter in SUMO2); alternate linkage. The PAS 2 domain occupies 326–396 (PQPVNGEIRV…ECHRQVLQTR (71 aa)). A Nuclear export signal 2 motif is present at residues 361–369 (LAYLPQELL). The PAC domain occupies 401–444 (TNCYKFKIKDGSFITLRSRWFSFMNPWTKEVEYIVSTNTVVLAN). 2 disordered regions span residues 457-493 (TASP…AGAG) and 510-597 (RGSS…SNDE). The span at 484 to 493 (IPGGTRAGAG) shows a compositional bias: gly residues. Positions 508-588 (RIRGSSPSSC…IGIDMIDNDQ (81 aa)) are interaction with CIART. Low complexity predominate over residues 511–521 (GSSPSSCGSSP). At Lys538 the chain carries N6-acetyllysine.

As to quaternary structure, component of the circadian clock oscillator which includes the CRY1/2 proteins, CLOCK or NPAS2, BMAL1 or BMAL2, CSNK1D and/or CSNK1E, TIMELESS and the PER1/2/3 proteins. Forms a heterodimer with CLOCK. The CLOCK-BMAL1 heterodimer is required for E-box-dependent transactivation, for CLOCK nuclear translocation and degradation, and, for phosphorylation of both CLOCK and BMAL1. Part of a nuclear complex which also includes RACK1 and PRKCA; RACK1 and PRKCA are recruited to the complex in a circadian manner. Interacts with NPAS2. Interacts with EZH2. Interacts with SUMO3. Interacts with SIRT1. Interacts with AHR. Interacts with ID1, ID2 and ID3. Interacts with DDX4. Interacts with OGT. Interacts with EED and SUZ12. Interacts with MTA1. Interacts with CIART. Interacts with HSP90. Interacts with KAT2B and EP300. Interacts with BHLHE40/DEC1 and BHLHE41/DEC2. Interacts with RELB and the interaction is enhanced in the presence of CLOCK. Interacts with PER1, PER2, CRY1 and CRY2 and this interaction requires a translocation to the nucleus. Interaction of the CLOCK-BMAL1 heterodimer with PER or CRY inhibits transcription activation. Interaction of the CLOCK-BMAL1 with CRY1 is independent of DNA but with PER2 is off DNA. The CLOCK-BMAL1 heterodimer interacts with GSK3B. Interacts with KDM5A. Interacts with KMT2A; in a circadian manner. Interacts with UBE3A. Interacts with PRKCG. Interacts with MAGEL2. Interacts with NCOA2. Interacts with THRAP3. The CLOCK-BMAL1 heterodimer interacts with PASD1. Interacts with PASD1. Interacts with USP9X. Interacts with PIWIL2 (via PIWI domain). Interacts with HDAC3. Interacts with HNF4A. In terms of processing, ubiquitinated, leading to its proteasomal degradation. Deubiquitinated by USP9X. Post-translationally, O-glycosylated; contains O-GlcNAc. O-glycosylation by OGT prevents protein degradation by inhibiting ubiquitination. It also stabilizes the CLOCK-BMAL1 heterodimer thereby increasing CLOCK-BMAL1-mediated transcription of genes in the negative loop of the circadian clock such as PER1/2/3 and CRY1/2. Acetylated on Lys-538 by CLOCK during the repression phase of the circadian cycle. Acetylation facilitates recruitment of CRY1 protein and initiates the repression phase of the circadian cycle. Acetylated at Lys-538 by KAT5 during the activation phase of the cycle, leading to recruitment of the positive transcription elongation factor b (P-TEFb) and BRD4, followed by productive elongation of circadian transcripts. Deacetylated by SIRT1, which may result in decreased protein stability. In terms of processing, phosphorylated upon dimerization with CLOCK. Phosphorylation enhances the transcriptional activity, alters the subcellular localization and decreases the stability of the CLOCK-BMAL1 heterodimer by promoting its degradation. Phosphorylation shows circadian variations in the liver with a peak between CT10 to CT14. Phosphorylation at Ser-90 by CK2 is essential for its nuclear localization, its interaction with CLOCK and controls CLOCK nuclear entry. Dephosphorylation at Ser-78 is important for dimerization with CLOCK and transcriptional activity. Post-translationally, sumoylated on Lys-259 upon dimerization with CLOCK. Predominantly conjugated to poly-SUMO2/3 rather than SUMO1 and the level of these conjugates undergo rhythmic variation, peaking at CT9-CT12. Sumoylation localizes it exclusively to the PML body and promotes its ubiquitination in the PML body, ubiquitin-dependent proteasomal degradation and the transcriptional activity of the CLOCK-BMAL1 heterodimer. Undergoes lysosome-mediated degradation in a time-dependent manner in the liver.

Its subcellular location is the nucleus. The protein resides in the cytoplasm. The protein localises to the PML body. In terms of biological role, transcriptional activator which forms a core component of the circadian clock. The circadian clock, an internal time-keeping system, regulates various physiological processes through the generation of approximately 24 hour circadian rhythms in gene expression, which are translated into rhythms in metabolism and behavior. It is derived from the Latin roots 'circa' (about) and 'diem' (day) and acts as an important regulator of a wide array of physiological functions including metabolism, sleep, body temperature, blood pressure, endocrine, immune, cardiovascular, and renal function. Consists of two major components: the central clock, residing in the suprachiasmatic nucleus (SCN) of the brain, and the peripheral clocks that are present in nearly every tissue and organ system. Both the central and peripheral clocks can be reset by environmental cues, also known as Zeitgebers (German for 'timegivers'). The predominant Zeitgeber for the central clock is light, which is sensed by retina and signals directly to the SCN. The central clock entrains the peripheral clocks through neuronal and hormonal signals, body temperature and feeding-related cues, aligning all clocks with the external light/dark cycle. Circadian rhythms allow an organism to achieve temporal homeostasis with its environment at the molecular level by regulating gene expression to create a peak of protein expression once every 24 hours to control when a particular physiological process is most active with respect to the solar day. Transcription and translation of core clock components (CLOCK, NPAS2, BMAL1, BMAL2, PER1, PER2, PER3, CRY1 and CRY2) plays a critical role in rhythm generation, whereas delays imposed by post-translational modifications (PTMs) are important for determining the period (tau) of the rhythms (tau refers to the period of a rhythm and is the length, in time, of one complete cycle). A diurnal rhythm is synchronized with the day/night cycle, while the ultradian and infradian rhythms have a period shorter and longer than 24 hours, respectively. Disruptions in the circadian rhythms contribute to the pathology of cardiovascular diseases, cancer, metabolic syndromes and aging. A transcription/translation feedback loop (TTFL) forms the core of the molecular circadian clock mechanism. Transcription factors, CLOCK or NPAS2 and BMAL1 or BMAL2, form the positive limb of the feedback loop, act in the form of a heterodimer and activate the transcription of core clock genes and clock-controlled genes (involved in key metabolic processes), harboring E-box elements (5'-CACGTG-3') within their promoters. The core clock genes: PER1/2/3 and CRY1/2 which are transcriptional repressors form the negative limb of the feedback loop and interact with the CLOCK|NPAS2-BMAL1|BMAL2 heterodimer inhibiting its activity and thereby negatively regulating their own expression. This heterodimer also activates nuclear receptors NR1D1, NR1D2, RORA, RORB and RORG, which form a second feedback loop and which activate and repress BMAL1 transcription, respectively. BMAL1 positively regulates myogenesis and negatively regulates adipogenesis via the transcriptional control of the genes of the canonical Wnt signaling pathway. Plays a role in normal pancreatic beta-cell function; regulates glucose-stimulated insulin secretion via the regulation of antioxidant genes NFE2L2/NRF2 and its targets SESN2, PRDX3, CCLC and CCLM. Negatively regulates the mTORC1 signaling pathway; regulates the expression of MTOR and DEPTOR. Controls diurnal oscillations of Ly6C inflammatory monocytes; rhythmic recruitment of the PRC2 complex imparts diurnal variation to chemokine expression that is necessary to sustain Ly6C monocyte rhythms. Regulates the expression of HSD3B2, STAR, PTGS2, CYP11A1, CYP19A1 and LHCGR in the ovary and also the genes involved in hair growth. Plays an important role in adult hippocampal neurogenesis by regulating the timely entry of neural stem/progenitor cells (NSPCs) into the cell cycle and the number of cell divisions that take place prior to cell-cycle exit. Regulates the circadian expression of CIART. The CLOCK-BMAL1 heterodimer regulates the circadian expression of SERPINE1/PAI1, VWF, B3, CCRN4L/NOC, NAMPT, DBP, MYOD1, PPARGC1A, PPARGC1B, SIRT1, GYS2, F7, NGFR, GNRHR, BHLHE40/DEC1, ATF4, MTA1 and also genes implicated in glucose and lipid metabolism. Promotes rhythmic chromatin opening, regulating the DNA accessibility of other transcription factors. The NPAS2-BMAL1 heterodimer positively regulates the expression of MAOA, F7 and LDHA and modulates the circadian rhythm of daytime contrast sensitivity by regulating the rhythmic expression of adenylate cyclase type 1 (ADCY1) in the retina. The preferred binding motif for the CLOCK-BMAL1 heterodimer is 5'-CACGTGA-3', which contains a flanking adenine nucleotide at the 3-prime end of the canonical 6-nucleotide E-box sequence. CLOCK specifically binds to the half-site 5'-CAC-3', while BMAL1 binds to the half-site 5'-GTGA-3'. The CLOCK-BMAL1 heterodimer also recognizes the non-canonical E-box motifs 5'-AACGTGA-3' and 5'-CATGTGA-3'. Essential for the rhythmic interaction of CLOCK with ASS1 and plays a critical role in positively regulating CLOCK-mediated acetylation of ASS1. Plays a role in protecting against lethal sepsis by limiting the expression of immune checkpoint protein CD274 in macrophages in a PKM2-dependent manner. Regulates the diurnal rhythms of skeletal muscle metabolism via transcriptional activation of genes promoting triglyceride synthesis (DGAT2) and metabolic efficiency (COQ10B). In Equus caballus (Horse), this protein is Basic helix-loop-helix ARNT-like protein 1 (BMAL1).